Here is a 314-residue protein sequence, read N- to C-terminus: uncharacterized protein (314 aa).

10 consecutive transmembrane segments (helical) span residues 4–23 (FFIG…YFSG), 36–53 (FNKL…FVSI), 68–90 (TLVS…YKFF), 97–116 (AAVC…GFAV), 131–153 (VAII…LNPS), 174–196 (PVVW…PAAW), 200–222 (FNLI…LAAH), 229–251 (EIAY…VGMA), 261–283 (MMVL…RFNV), and 290–309 (ASLA…WIYV).

It belongs to the auxin efflux carrier (TC 2.A.69) family.

The protein localises to the cell membrane. This is an uncharacterized protein from Escherichia coli O157:H7.